Reading from the N-terminus, the 233-residue chain is MKVGIIGAMEEEVTLLRDRIENRQTLARAGCEIYTGQLNGIDVALLKSGIGKVAAAMGTTLLLEHCQPDLVINTGSAGGLDSSLKVGDIVVSNEVRYHDADVTAFGYEPGQMAGCPAAFVADEDLIALAENCIQQLKLNAVRGLICSGDAFINGAEPLARIRAAFPTVAAVEMEAAAIGHVCYLFNTPFVVVRAISDVADQASHLSFEEFLVVAAKQSTLMIKAMLTTLAQRG.

The Proton acceptor role is filled by Glu-12. Substrate-binding positions include Gly-78, Ile-152, and 173–174 (ME). The active-site Proton donor is Asp-197.

Belongs to the PNP/UDP phosphorylase family. MtnN subfamily. As to quaternary structure, homodimer.

It carries out the reaction S-adenosyl-L-homocysteine + H2O = S-(5-deoxy-D-ribos-5-yl)-L-homocysteine + adenine. It catalyses the reaction S-methyl-5'-thioadenosine + H2O = 5-(methylsulfanyl)-D-ribose + adenine. The catalysed reaction is 5'-deoxyadenosine + H2O = 5-deoxy-D-ribose + adenine. Its pathway is amino-acid biosynthesis; L-methionine biosynthesis via salvage pathway; S-methyl-5-thio-alpha-D-ribose 1-phosphate from S-methyl-5'-thioadenosine (hydrolase route): step 1/2. In terms of biological role, catalyzes the irreversible cleavage of the glycosidic bond in both 5'-methylthioadenosine (MTA) and S-adenosylhomocysteine (SAH/AdoHcy) to adenine and the corresponding thioribose, 5'-methylthioribose and S-ribosylhomocysteine, respectively. Also cleaves 5'-deoxyadenosine, a toxic by-product of radical S-adenosylmethionine (SAM) enzymes, into 5-deoxyribose and adenine. Thus, is required for in vivo function of the radical SAM enzymes biotin synthase and lipoic acid synthase, that are inhibited by 5'-deoxyadenosine accumulation. In Yersinia pestis bv. Antiqua (strain Angola), this protein is 5'-methylthioadenosine/S-adenosylhomocysteine nucleosidase.